A 142-amino-acid chain; its full sequence is Hemoglobin subunit alpha-I/II (142 aa).

The region spanning 2 to 142 is the Globin domain; that stretch reads VLSAADKGNV…VSTVLTSKYR (141 aa). Residue S4 is modified to Phosphoserine. K8 and K12 each carry N6-succinyllysine. K17 bears the N6-acetyllysine; alternate mark. N6-succinyllysine; alternate is present on K17. Phosphotyrosine is present on Y25. Phosphoserine is present on S36. Residue K41 is modified to N6-succinyllysine. S50 bears the Phosphoserine mark. H59 serves as a coordination point for O2. H88 provides a ligand contact to heme b. S103 carries the post-translational modification Phosphoserine. At T109 the chain carries Phosphothreonine. At S125 the chain carries Phosphoserine. 2 positions are modified to phosphothreonine: T135 and T138. S139 bears the Phosphoserine mark.

This sequence belongs to the globin family. In terms of assembly, heterotetramer of two alpha chains and two beta chains. Red blood cells.

In terms of biological role, involved in oxygen transport from the lung to the various peripheral tissues. The protein is Hemoglobin subunit alpha-I/II of Bison bonasus (European bison).